We begin with the raw amino-acid sequence, 780 residues long: Acyl-CoA dehydrogenase family member 11 (780 aa).

K177 is modified (N6-acetyllysine). A Phosphotyrosine modification is found at Y324. Residue K391 is modified to N6-succinyllysine. Residues 504–514 and 538–540 each bind FAD; these read FCMTEPDVASS and WSS. A substrate-binding site is contributed by S514. 629-632 is a binding site for substrate; the sequence is GPGR. FAD is bound by residues R657, Q727, and 727 to 731; that span reads QVCGG. G755 lines the substrate pocket. 756-758 contacts FAD; sequence PDE.

It belongs to the acyl-CoA dehydrogenase family. Homodimer. FAD serves as cofactor. In terms of tissue distribution, widely expressed with highest levels in brain followed by liver, heart and kidney.

It is found in the peroxisome. It localises to the mitochondrion membrane. It carries out the reaction a 2,3-saturated acyl-CoA + oxidized [electron-transfer flavoprotein] + H(+) = a (2E)-enoyl-CoA + reduced [electron-transfer flavoprotein]. The catalysed reaction is docosanoyl-CoA + oxidized [electron-transfer flavoprotein] + H(+) = (2E)-docosenoyl-CoA + reduced [electron-transfer flavoprotein]. The enzyme catalyses tetracosanoyl-CoA + oxidized [electron-transfer flavoprotein] + H(+) = (2E)-tetracosenoyl-CoA + reduced [electron-transfer flavoprotein]. It catalyses the reaction eicosanoyl-CoA + oxidized [electron-transfer flavoprotein] + H(+) = (2E)-eicosenoyl-CoA + reduced [electron-transfer flavoprotein]. It carries out the reaction hexacosanoyl-CoA + oxidized [electron-transfer flavoprotein] + H(+) = (2E)-hexacosenoyl-CoA + reduced [electron-transfer flavoprotein]. The catalysed reaction is tricosanoyl-CoA + oxidized [electron-transfer flavoprotein] + H(+) = (2E)-tricosenoyl-CoA + reduced [electron-transfer flavoprotein]. It participates in lipid metabolism; fatty acid beta-oxidation. Its function is as follows. Acyl-CoA dehydrogenase, that exhibits maximal activity towards saturated C22-CoA. Probably participates in beta-oxydation and energy production but could also play a role in the metabolism of specific fatty acids to control fatty acids composition of cellular lipids in brain. The chain is Acyl-CoA dehydrogenase family member 11 (ACAD11) from Homo sapiens (Human).